The sequence spans 833 residues: Translation initiation factor IF-2 (833 aa).

The region spanning 331 to 501 (TRAPVVTVMG…LLIAEMQDLK (171 aa)) is the tr-type G domain. Residues 340–347 (GHVDHGKT) form a G1 region. 340–347 (GHVDHGKT) provides a ligand contact to GTP. Residues 365-369 (GITQH) are G2. Residues 387 to 390 (DTPG) are G3. GTP contacts are provided by residues 387-391 (DTPGH) and 441-444 (NKID). A G4 region spans residues 441–444 (NKID). The G5 stretch occupies residues 477-479 (SAL).

Belongs to the TRAFAC class translation factor GTPase superfamily. Classic translation factor GTPase family. IF-2 subfamily.

The protein localises to the cytoplasm. One of the essential components for the initiation of protein synthesis. Protects formylmethionyl-tRNA from spontaneous hydrolysis and promotes its binding to the 30S ribosomal subunits. Also involved in the hydrolysis of GTP during the formation of the 70S ribosomal complex. This Rickettsia canadensis (strain McKiel) protein is Translation initiation factor IF-2.